Reading from the N-terminus, the 519-residue chain is uncharacterized protein (519 aa).

4 helical membrane passes run 141–161, 202–222, 385–405, and 433–453; these read GSSL…ANVF, LGET…WALA, FVVR…PFVG, and TVVP…AELV.

It is found in the cell membrane. This is an uncharacterized protein from Sinorhizobium fredii (strain NBRC 101917 / NGR234).